The primary structure comprises 348 residues: Lipopolysaccharide heptosyltransferase 2 (348 aa).

Belongs to the glycosyltransferase 9 family.

The enzyme catalyses an L-alpha-D-Hep-(1-&gt;5)-[alpha-Kdo-(2-&gt;4)]-alpha-Kdo-(2-&gt;6)-lipid A + ADP-L-glycero-beta-D-manno-heptose = an L-alpha-D-Hep-(1-&gt;3)-L-alpha-D-Hep-(1-&gt;5)-[alpha-Kdo-(2-&gt;4)]-alpha-Kdo-(2-&gt;6)-lipid A + ADP + H(+). It catalyses the reaction L-alpha-D-Hep-(1-&gt;5)-[alpha-Kdo-(2-&gt;4)]-alpha-Kdo-(2-&gt;6)-lipid A (E. coli) + ADP-L-glycero-beta-D-manno-heptose = L-alpha-D-Hep-(1-&gt;3)-L-alpha-D-Hep-(1-&gt;5)-[alpha-Kdo-(2-&gt;4)]-alpha-Kdo-(2-&gt;6)-lipid A (E. coli) + ADP + H(+). The protein operates within bacterial outer membrane biogenesis; LPS core biosynthesis. In terms of biological role, glycosyltransferase involved in the biosynthesis of the core oligosaccharide region of lipopolysaccharide (LPS). Catalyzes the addition of the second heptose unit to the heptosyl-Kdo2-lipid A module. The analog ADP-mannose can serve as an alternative donor in place of ADP-L-glycero-D-manno-heptose, but with lower efficiency. The polypeptide is Lipopolysaccharide heptosyltransferase 2 (Escherichia coli (strain K12)).